Consider the following 65-residue polypeptide: Temporin-LK1 (65 aa).

The signal sequence occupies residues 1–22; that stretch reads MFTMKKSLLLLFFLGAINLPLC. Positions 23–44 are excised as a propeptide; that stretch reads QEERNAEEERRDGDDEGSVEVQ. Phe-63 is subject to Phenylalanine amide.

In terms of tissue distribution, expressed by the skin glands.

The protein resides in the secreted. Has antimicrobial activity against Gram-positive bacteria S.aureus ATCC 2592 (MIC=2.5 uM), S.aureus ATCC 43300 (MIC=2.5 uM) and B.subtilis (MIC=15.0 uM), against Gram-negative bacteria E.coli ML-35P (MIC=30.0 uM), P.aeruginosa PA01 (MIC=2.5 uM) and P.aeruginosa ATCC 27853 (MIC=2.5 uM) and against fungus C.albicans ATCC 2002 (MIC=5.0 uM). The sequence is that of Temporin-LK1 from Limnonectes kuhlii (Kuhl's Creek frog).